We begin with the raw amino-acid sequence, 324 residues long: Serpentine receptor class gamma-10 (324 aa).

Helical transmembrane passes span 39-59 (SSYL…VFHG), 69-89 (MLYC…VIFG), 91-111 (IFIY…TPSI), 128-146 (TFSQ…IFLM), 155-175 (ILKP…WKIL), 206-226 (LFHF…TILG), 246-266 (MIMA…VFFA), and 279-299 (IVSF…IVMS).

The protein belongs to the nematode receptor-like protein srg family.

The protein resides in the membrane. This Caenorhabditis elegans protein is Serpentine receptor class gamma-10 (srg-10).